The sequence spans 175 residues: CASP-like protein 2C1 (175 aa).

Residues 1-7 (MVKLRET) are Cytoplasmic-facing. Residues 8 to 28 (EVILRLCIVFFLLLTSCLIGL) form a helical membrane-spanning segment. At 29–45 (DSQTKEIAYIHKNVSFR) the chain is on the extracellular side. N-linked (GlcNAc...) asparagine glycosylation is present at Asn41. Residues 46–66 (YLLALEAELYIDVVVAAYNLV) form a helical membrane-spanning segment. At 67–91 (QLGLGWYNVEQKTSNPKWFSYLLDQ) the chain is on the cytoplasmic side. A helical membrane pass occupies residues 92–112 (TAAYVVFAGTSAAAQHSLLVV). Over 113–136 (TGSRELQWMKWCYKFTRFCFQMGS) the chain is Extracellular. The helical transmembrane segment at 137–157 (AIILNYIAAALMVLLSSISAF) threads the bilayer. Topologically, residues 158–175 (NLFRLYSPKRFFRFKSSS) are cytoplasmic.

The protein belongs to the Casparian strip membrane proteins (CASP) family. As to quaternary structure, homodimer and heterodimers.

It localises to the cell membrane. In Arabidopsis thaliana (Mouse-ear cress), this protein is CASP-like protein 2C1.